The sequence spans 478 residues: Cysteine--tRNA ligase (478 aa).

Position 29 (Cys29) interacts with Zn(2+). A 'HIGH' region motif is present at residues 31 to 41 (VTVYDYCHLGH). Zn(2+) contacts are provided by Cys213, His238, and Glu242. A 'KMSKS' region motif is present at residues 270 to 274 (KMSKS). Lys273 is a binding site for ATP.

This sequence belongs to the class-I aminoacyl-tRNA synthetase family. Monomer. Requires Zn(2+) as cofactor.

Its subcellular location is the cytoplasm. The catalysed reaction is tRNA(Cys) + L-cysteine + ATP = L-cysteinyl-tRNA(Cys) + AMP + diphosphate. In Synechococcus sp. (strain ATCC 27144 / PCC 6301 / SAUG 1402/1) (Anacystis nidulans), this protein is Cysteine--tRNA ligase.